A 251-amino-acid chain; its full sequence is Pyridoxine 5'-phosphate synthase (251 aa).

Position 7 (Asn7) interacts with 3-amino-2-oxopropyl phosphate. 9–10 (DH) serves as a coordination point for 1-deoxy-D-xylulose 5-phosphate. Arg18 is a binding site for 3-amino-2-oxopropyl phosphate. His43 (proton acceptor) is an active-site residue. Arg45 and His50 together coordinate 1-deoxy-D-xylulose 5-phosphate. Glu70 acts as the Proton acceptor in catalysis. Thr100 contributes to the 1-deoxy-D-xylulose 5-phosphate binding site. His198 serves as the catalytic Proton donor. 3-amino-2-oxopropyl phosphate-binding positions include Ala199 and 220–221 (GH).

The protein belongs to the PNP synthase family. In terms of assembly, homooctamer; tetramer of dimers.

It localises to the cytoplasm. It catalyses the reaction 3-amino-2-oxopropyl phosphate + 1-deoxy-D-xylulose 5-phosphate = pyridoxine 5'-phosphate + phosphate + 2 H2O + H(+). The protein operates within cofactor biosynthesis; pyridoxine 5'-phosphate biosynthesis; pyridoxine 5'-phosphate from D-erythrose 4-phosphate: step 5/5. In terms of biological role, catalyzes the complicated ring closure reaction between the two acyclic compounds 1-deoxy-D-xylulose-5-phosphate (DXP) and 3-amino-2-oxopropyl phosphate (1-amino-acetone-3-phosphate or AAP) to form pyridoxine 5'-phosphate (PNP) and inorganic phosphate. The sequence is that of Pyridoxine 5'-phosphate synthase from Aromatoleum aromaticum (strain DSM 19018 / LMG 30748 / EbN1) (Azoarcus sp. (strain EbN1)).